Consider the following 390-residue polypeptide: Putative gustatory receptor 59d (390 aa).

Residues 1–38 (MADLLKLCLRIAYAYGRLTGVINFKIDLKTGQALVTRG) are Cytoplasmic-facing. A helical transmembrane segment spans residues 39–59 (ATLISVSTHLLIFALLLYQTM). Over 60–75 (RKSVVNVMWKYANSLH) the chain is Extracellular. A helical transmembrane segment spans residues 76–96 (EYVFLVIAGFRVVCVFLELVS). Topologically, residues 97–128 (RWSQRRTFVRLFNSFRRLYQRNPDIIQYCRRS) are cytoplasmic. A helical membrane pass occupies residues 129–149 (IVSKFFCVTMTETLHIIVTLA). Over 150–156 (MMRNRLS) the chain is Extracellular. The helical transmembrane segment at 157 to 177 (IALALRIWAVLSLTAIINVII) threads the bilayer. Topologically, residues 178–252 (TQYYVATACV…NLSTAYEGEV (75 aa)) are cytoplasmic. Residues 253–273 (VCLVITYYLNMLGTSYLLFSI) form a helical membrane-spanning segment. The Extracellular segment spans residues 274-283 (SKYGNFGNNL). The chain crosses the membrane as a helical span at residues 284–304 (LVIITLCGIVYFVFYVVDCWI). Topologically, residues 305–366 (NAFNVFYLLD…MYGLFEFGRG (62 aa)) are cytoplasmic. The helical transmembrane segment at 367–383 (TSFAVFNSLLTHSLLLI) threads the bilayer. At 384 to 390 (QYDVQNF) the chain is on the extracellular side.

This sequence belongs to the insect chemoreceptor superfamily. Gustatory receptor (GR) family. Gr22e subfamily. In terms of tissue distribution, expressed in the adult labellar chemosensory neurons. In larvae, is expressed in neurons of the terminal external chemosensory organ as well as in the dorsal pharyngeal sense organ.

The protein resides in the cell membrane. Probable gustatory receptor which mediates acceptance or avoidance behavior, depending on its substrates. In Drosophila melanogaster (Fruit fly), this protein is Putative gustatory receptor 59d (Gr59d).